The primary structure comprises 175 residues: MEPLQITEEIQNWMHKAFQMAQDALNNGEVPVGCLMVYGNQVVGKGRNEVNETKNATQHAEMVAIDQVLDWCEMNSKKSTDVFENIVLYVTVEPCIMCAGALRLLKIPLVVYGCRNERFGGCGSVLNVSGDDIPDTGTKFKCIGGYQAEKAIELLKTFYKQENPNAPKSKVRKKE.

Positions 8–133 constitute a CMP/dCMP-type deaminase domain; it reads EEIQNWMHKA…SVLNVSGDDI (126 aa). His59 contributes to the Zn(2+) binding site. The active-site Proton donor is Glu61. Residues Cys95 and Cys98 each contribute to the Zn(2+) site.

It belongs to the cytidine and deoxycytidylate deaminase family. ADAT2 subfamily. The cofactor is Zn(2+).

It carries out the reaction adenosine(34) in tRNA + H2O + H(+) = inosine(34) in tRNA + NH4(+). Its function is as follows. Probably participates in deamination of adenosine-34 to inosine in many tRNAs. This Xenopus laevis (African clawed frog) protein is tRNA-specific adenosine deaminase 2 (adat2).